Reading from the N-terminus, the 205-residue chain is Fibrillarin-like rRNA/tRNA 2'-O-methyltransferase (205 aa).

Residues 60 to 61, 76 to 77, 101 to 102, and 121 to 124 contribute to the S-adenosyl-L-methionine site; these read ST, EF, DA, and DIAQ.

Belongs to the methyltransferase superfamily. Fibrillarin family. Interacts with nop5. Component of box C/D small ribonucleoprotein (sRNP) particles that contain rpl7ae, FlpA and nop5, plus a guide RNA.

Its function is as follows. Involved in pre-rRNA and tRNA processing. Utilizes the methyl donor S-adenosyl-L-methionine to catalyze the site-specific 2'-hydroxyl methylation of ribose moieties in rRNA and tRNA. Site specificity is provided by a guide RNA that base pairs with the substrate. Methylation occurs at a characteristic distance from the sequence involved in base pairing with the guide RNA. In Methanospirillum hungatei JF-1 (strain ATCC 27890 / DSM 864 / NBRC 100397 / JF-1), this protein is Fibrillarin-like rRNA/tRNA 2'-O-methyltransferase.